The following is a 71-amino-acid chain: Ranatuerin-2Va (71 aa).

An N-terminal signal peptide occupies residues 1–22 (MFTLKKSFLLLFFLGTITLSLC). The propeptide occupies 23-43 (EQERGADEDDGVEMTEEEVKR). An intrachain disulfide couples cysteine 66 to cysteine 71.

In terms of tissue distribution, expressed by the skin glands.

The protein resides in the secreted. Antimicrobial peptide. The protein is Ranatuerin-2Va of Odorrana versabilis (Chinese bamboo leaf odorous frog).